The sequence spans 489 residues: DNA-directed RNA polymerase subunit beta' C-terminal section (489 aa).

Mg(2+)-binding residues include Asp208, Asp210, and Asp212.

Belongs to the RNA polymerase beta' chain family. RpoC1 subfamily. In terms of assembly, in plastids the minimal PEP RNA polymerase catalytic core is composed of four subunits: alpha, beta, beta', and beta''. When a (nuclear-encoded) sigma factor is associated with the core the holoenzyme is formed, which can initiate transcription. Mg(2+) serves as cofactor.

It is found in the plastid. Its subcellular location is the chloroplast. The enzyme catalyses RNA(n) + a ribonucleoside 5'-triphosphate = RNA(n+1) + diphosphate. In terms of biological role, DNA-dependent RNA polymerase catalyzes the transcription of DNA into RNA using the four ribonucleoside triphosphates as substrates. This chain is DNA-directed RNA polymerase subunit beta' C-terminal section (rpoC1B), found in Chlamydomonas reinhardtii (Chlamydomonas smithii).